We begin with the raw amino-acid sequence, 708 residues long: Elongation factor G (708 aa).

A tr-type G domain is found at 8-290; the sequence is KRYRNIGISA…AVIQYLPAPM (283 aa). GTP contacts are provided by residues 17–24, 88–92, and 142–145; these read AHIDAGKT, DTPGH, and NKMD.

Belongs to the TRAFAC class translation factor GTPase superfamily. Classic translation factor GTPase family. EF-G/EF-2 subfamily.

The protein localises to the cytoplasm. In terms of biological role, catalyzes the GTP-dependent ribosomal translocation step during translation elongation. During this step, the ribosome changes from the pre-translocational (PRE) to the post-translocational (POST) state as the newly formed A-site-bound peptidyl-tRNA and P-site-bound deacylated tRNA move to the P and E sites, respectively. Catalyzes the coordinated movement of the two tRNA molecules, the mRNA and conformational changes in the ribosome. The chain is Elongation factor G from Psychrobacter cryohalolentis (strain ATCC BAA-1226 / DSM 17306 / VKM B-2378 / K5).